A 424-amino-acid chain; its full sequence is Enolase (424 aa).

(2R)-2-phosphoglycerate is bound at residue Gln-163. Glu-204 serves as the catalytic Proton donor. Asp-241, Glu-284, and Asp-311 together coordinate Mg(2+). (2R)-2-phosphoglycerate is bound by residues Lys-336, Arg-365, Ser-366, and Lys-387. Lys-336 functions as the Proton acceptor in the catalytic mechanism.

This sequence belongs to the enolase family. The cofactor is Mg(2+).

It is found in the cytoplasm. The protein localises to the secreted. Its subcellular location is the cell surface. The catalysed reaction is (2R)-2-phosphoglycerate = phosphoenolpyruvate + H2O. It participates in carbohydrate degradation; glycolysis; pyruvate from D-glyceraldehyde 3-phosphate: step 4/5. Catalyzes the reversible conversion of 2-phosphoglycerate (2-PG) into phosphoenolpyruvate (PEP). It is essential for the degradation of carbohydrates via glycolysis. The polypeptide is Enolase (Dictyoglomus thermophilum (strain ATCC 35947 / DSM 3960 / H-6-12)).